The following is a 611-amino-acid chain: Rho-related BTB domain-containing protein 3 (611 aa).

The tract at residues 1 to 175 (MSIHIVALGN…KELGATYLEL (175 aa)) is rho-like. BTB domains follow at residues 254–356 (VDVV…QWEE) and 420–487 (ADVV…CPAG). Residues 420-611 (ADVVFEIQGT…HSRKCRCLVM (192 aa)) are interaction with Rab9.

Interacts with RAB9A and RAB9B (at lower level compared to RAB9A-binding). Interacts with M6PRBP1/TIP47. In terms of tissue distribution, ubiquitous. Highly expressed in neural and cardiac tissues, pancreas, placenta and testis.

Its subcellular location is the golgi apparatus. In terms of biological role, rab9-regulated ATPase required for endosome to Golgi transport. Involved in transport vesicle docking at the Golgi complex, possibly by participating in release M6PRBP1/TIP47 from vesicles to permit their efficient docking and fusion at the Golgi. Specifically binds Rab9, but not other Rab proteins. Has low intrinsic ATPase activity due to autoinhibition, which is relieved by Rab9. The protein is Rho-related BTB domain-containing protein 3 (RHOBTB3) of Homo sapiens (Human).